We begin with the raw amino-acid sequence, 191 residues long: Cell division protein SepF (191 aa).

A compositionally biased stretch (polar residues) spans 153-178 (FPEEVSPSNISSKKTSPYSLETNTTP). The segment at 153 to 191 (FPEEVSPSNISSKKTSPYSLETNTTPEPAWGESKLSAFS) is disordered.

The protein belongs to the SepF family. In terms of assembly, homodimer. Interacts with FtsZ.

Its subcellular location is the cytoplasm. Functionally, cell division protein that is part of the divisome complex and is recruited early to the Z-ring. Probably stimulates Z-ring formation, perhaps through the cross-linking of FtsZ protofilaments. Its function overlaps with FtsA. The sequence is that of Cell division protein SepF from Prochlorococcus marinus (strain MIT 9515).